We begin with the raw amino-acid sequence, 96 residues long: Large ribosomal subunit protein bL21 (96 aa).

Belongs to the bacterial ribosomal protein bL21 family. Part of the 50S ribosomal subunit. Contacts protein L20.

This protein binds to 23S rRNA in the presence of protein L20. The sequence is that of Large ribosomal subunit protein bL21 from Chlorobium phaeobacteroides (strain BS1).